We begin with the raw amino-acid sequence, 194 residues long: dTTP/UTP pyrophosphatase (194 aa).

Asp-73 serves as the catalytic Proton acceptor.

The protein belongs to the Maf family. YhdE subfamily. A divalent metal cation serves as cofactor.

It is found in the cytoplasm. It carries out the reaction dTTP + H2O = dTMP + diphosphate + H(+). It catalyses the reaction UTP + H2O = UMP + diphosphate + H(+). Nucleoside triphosphate pyrophosphatase that hydrolyzes dTTP and UTP. May have a dual role in cell division arrest and in preventing the incorporation of modified nucleotides into cellular nucleic acids. The polypeptide is dTTP/UTP pyrophosphatase (Clostridium botulinum (strain Kyoto / Type A2)).